The sequence spans 382 residues: Nitric oxide reductase FlRd-NAD(+) reductase (382 aa).

Belongs to the FAD-dependent oxidoreductase family. Requires FAD as cofactor.

It localises to the cytoplasm. The catalysed reaction is 2 reduced [nitric oxide reductase rubredoxin domain] + NAD(+) + H(+) = 2 oxidized [nitric oxide reductase rubredoxin domain] + NADH. Its pathway is nitrogen metabolism; nitric oxide reduction. In terms of biological role, one of at least two accessory proteins for anaerobic nitric oxide (NO) reductase. Reduces the rubredoxin moiety of NO reductase. This Vibrio vulnificus (strain YJ016) protein is Nitric oxide reductase FlRd-NAD(+) reductase.